A 180-amino-acid polypeptide reads, in one-letter code: Pituitary tumor-transforming gene 1 protein-interacting protein (180 aa).

Positions 1–32 (MAPGVARGPTPYWRLRLGGAALLLLLIPVAAA) are cleaved as a signal peptide. Topologically, residues 33 to 96 (QEPPGAACSQ…RWGVCWVNFE (64 aa)) are extracellular. Residues 39 to 92 (ACSQNTNKTCEECLKNVSCLWCNTNKACLDYPVTSVLPPASLCKLSSARWGVCW) enclose the PSI domain. Residues N45 and N54 are each glycosylated (N-linked (GlcNAc...) asparagine). The chain crosses the membrane as a helical span at residues 97-117 (ALIITMSVVGGTLLLGIAICC). Residues 118–180 (CCCCRRKRSR…ENPYARFENN (63 aa)) are Cytoplasmic-facing. A coiled-coil region spans residues 130-165 (DRSEEKAMREREERRIRQEERRAEMKTRHDEIRKKY). The segment at 131–157 (RSEEKAMREREERRIRQEERRAEMKTR) is disordered. A Phosphotyrosine modification is found at Y174.

In terms of assembly, interacts with PTTG1. Ubiquitous.

It localises to the membrane. Its subcellular location is the cytoplasm. The protein localises to the nucleus. In terms of biological role, may facilitate PTTG1 nuclear translocation. The sequence is that of Pituitary tumor-transforming gene 1 protein-interacting protein (PTTG1IP) from Homo sapiens (Human).